A 238-amino-acid chain; its full sequence is MPSSTYPRRRFDEVFLVEISSRILVTQEKHQQEEEEKKVRMAGKANVSVLMSEDASFHQKVAVEKRLKIGEVILRFAMIALALVAAVRVGTDTQTRTIFTIEKKAKYSDMKALVFLVVMNGIVASYSLLQGLRCVLSIYTQSPLTSKPLAWLIFALDQTMAYFSLAAAAAAAESAYLAERGQTEFQWMKVCIFYEKFCHQIGEGLVSTFLVSLSMATVSGMSAYHLFRLYGSKGKSIQ.

Residues 1–66 (MPSSTYPRRR…FHQKVAVEKR (66 aa)) are Cytoplasmic-facing. A helical membrane pass occupies residues 67 to 87 (LKIGEVILRFAMIALALVAAV). Topologically, residues 88–111 (RVGTDTQTRTIFTIEKKAKYSDMK) are extracellular. A helical transmembrane segment spans residues 112–132 (ALVFLVVMNGIVASYSLLQGL). Topologically, residues 133–148 (RCVLSIYTQSPLTSKP) are cytoplasmic. A helical membrane pass occupies residues 149-169 (LAWLIFALDQTMAYFSLAAAA). Topologically, residues 170–200 (AAAESAYLAERGQTEFQWMKVCIFYEKFCHQ) are extracellular. A helical transmembrane segment spans residues 201–221 (IGEGLVSTFLVSLSMATVSGM). The Cytoplasmic segment spans residues 222–238 (SAYHLFRLYGSKGKSIQ).

It belongs to the Casparian strip membrane proteins (CASP) family. Homodimer and heterodimers.

Its subcellular location is the cell membrane. The protein is CASP-like protein 2BC2 of Picea sitchensis (Sitka spruce).